We begin with the raw amino-acid sequence, 306 residues long: Glutathione transport system permease protein GsiC (306 aa).

The Cytoplasmic segment spans residues 1–8 (MLNYFIKR). Residues 9 to 29 (LLGLIPTLLIVMVLVFLFVHL) form a helical membrane-spanning segment. The Periplasmic portion of the chain corresponds to 30-98 (LPGDPARLAA…QEIALRFMPT (69 aa)). The 198-residue stretch at 95–292 (FMPTFWLTVC…LEFILINLLV (198 aa)) folds into the ABC transmembrane type-1 domain. A helical membrane pass occupies residues 99 to 119 (FWLTVCSMAWAVIFGMAIGIV). The Cytoplasmic portion of the chain corresponds to 120 to 130 (SAVWRNGWPDR). The helical transmembrane segment at 131–151 (IGMTLAVSGLSFPAFALGMLL) threads the bilayer. Over 152–168 (MQIFSVELGWLPTVGAD) the chain is Periplasmic. The helical transmembrane segment at 169-189 (TWLHYILPSLTLGAAVAAVMA) threads the bilayer. Topologically, residues 190–228 (RFTRASFVDVLQEDYMRTARAKGVRESLVVLKHGLRNAL) are cytoplasmic. A helical transmembrane segment spans residues 229–249 (IPVVTMMGLQFGFLLGGSIVV). Over 250-278 (EKVFNWPGLGRLLVDSVEMRDYPVIQAEV) the chain is Periplasmic. A helical membrane pass occupies residues 279–299 (LLFSLEFILINLLVDMLYAAI). The Cytoplasmic segment spans residues 300–306 (NPAIRYK).

Belongs to the binding-protein-dependent transport system permease family. In terms of assembly, the complex is composed of two ATP-binding proteins (GsiA), two transmembrane proteins (GsiC and GsiD) and a solute-binding protein (GsiB).

It localises to the cell inner membrane. Functionally, part of the ABC transporter complex GsiABCD involved in glutathione import. Probably responsible for the translocation of the substrate across the membrane. The chain is Glutathione transport system permease protein GsiC from Pectobacterium atrosepticum (strain SCRI 1043 / ATCC BAA-672) (Erwinia carotovora subsp. atroseptica).